A 287-amino-acid chain; its full sequence is Large ribosomal subunit protein uL2 (287 aa).

The disordered stretch occupies residues Arg221 to Ser287. Residues Lys258–Ser287 show a composition bias toward basic residues.

This sequence belongs to the universal ribosomal protein uL2 family. Part of the 50S ribosomal subunit. Forms a bridge to the 30S subunit in the 70S ribosome.

Functionally, one of the primary rRNA binding proteins. Required for association of the 30S and 50S subunits to form the 70S ribosome, for tRNA binding and peptide bond formation. It has been suggested to have peptidyltransferase activity; this is somewhat controversial. Makes several contacts with the 16S rRNA in the 70S ribosome. The chain is Large ribosomal subunit protein uL2 from Prochlorococcus marinus (strain MIT 9301).